Reading from the N-terminus, the 216-residue chain is Protein Syd (216 aa).

It belongs to the Syd family.

It localises to the cell inner membrane. In terms of biological role, interacts with the SecY protein in vivo. May bind preferentially to an uncomplexed state of SecY, thus functioning either as a chelating agent for excess SecY in the cell or as a regulatory factor that negatively controls the translocase function. The chain is Protein Syd from Shewanella sp. (strain W3-18-1).